The primary structure comprises 362 residues: Probable cinnamyl alcohol dehydrogenase 9 (362 aa).

Zn(2+) is bound at residue Cys-45. Ser-47 is an NADP(+) binding site. Zn(2+) contacts are provided by His-67, Glu-68, Cys-98, Cys-101, Cys-104, Cys-112, and Cys-167. NADP(+) is bound by residues Thr-171, 192–197, 215–220, Thr-255, Gly-279, and 302–304; these read GLGGLG, STSPWK, and SMI.

This sequence belongs to the zinc-containing alcohol dehydrogenase family. As to quaternary structure, homodimer. Zn(2+) serves as cofactor.

The catalysed reaction is (E)-cinnamyl alcohol + NADP(+) = (E)-cinnamaldehyde + NADPH + H(+). The enzyme catalyses (E)-coniferol + NADP(+) = (E)-coniferaldehyde + NADPH + H(+). It catalyses the reaction (E)-sinapyl alcohol + NADP(+) = (E)-sinapaldehyde + NADPH + H(+). It carries out the reaction (E)-4-coumaroyl alcohol + NADP(+) = (E)-4-coumaraldehyde + NADPH + H(+). The catalysed reaction is (E)-caffeyl alcohol + NADP(+) = (E)-caffeyl aldehyde + NADPH + H(+). It functions in the pathway aromatic compound metabolism; phenylpropanoid biosynthesis. Functionally, involved in lignin biosynthesis. Catalyzes the final step specific for the production of lignin monomers. Catalyzes the NADPH-dependent reduction of coniferaldehyde, 5-hydroxyconiferaldehyde, sinapaldehyde, 4-coumaraldehyde and caffeyl aldehyde to their respective alcohols. The protein is Probable cinnamyl alcohol dehydrogenase 9 of Oryza sativa subsp. japonica (Rice).